The chain runs to 714 residues: Choline transporter-like protein 5 (714 aa).

Residues 1–33 (MGRRSAAPTSPFGEPRKFDPKFKGPIGKRHCTD) lie on the Cytoplasmic side of the membrane. A helical membrane pass occupies residues 34–54 (VLCCIIFVVVILGYIALGVVA). Over 55-237 (WIHGDPRKII…KIFEDYASSW (183 aa)) the chain is Extracellular. 4 N-linked (GlcNAc...) asparagine glycosylation sites follow: Asn83, Asn132, Asn192, and Asn205. A helical transmembrane segment spans residues 238-258 (YWILIALFIAMVVSLLFLILL). Topologically, residues 259–261 (RFT) are cytoplasmic. The helical transmembrane segment at 262 to 282 (AGVFFWIFIIGVIGVVGYGIW) threads the bilayer. Residues 283–320 (HCFWEYDSLKGVPGADLTIYDIGLQTDFRVYLQLRQTW) are Extracellular-facing. A helical transmembrane segment spans residues 321–341 (LAFMILLCIVEVIIILMLIFL). Residues 342–346 (RNRIR) are Cytoplasmic-facing. Residues 347–367 (IAIALLQEGSRAIGYIMSTLF) traverse the membrane as a helical segment. The Extracellular segment spans residues 368–369 (YP). The chain crosses the membrane as a helical span at residues 370 to 390 (IITFILIAICISYWAVTAVFM). Topologically, residues 391–455 (ATSGEPIYKV…QYILIFQLCN (65 aa)) are cytoplasmic. A helical transmembrane segment spans residues 456 to 476 (VFVFLWLVNFSIALGQCTLAG). Topologically, residues 477–510 (AFASYYWAFKKPADIPACPLFSSFGRAIRYHTGS) are extracellular. The chain crosses the membrane as a helical span at residues 511-531 (LALGSLILALVQFIRIILEYL). At 532 to 605 (DHKLKASQNS…RVAVLDKVTD (74 aa)) the chain is on the cytoplasmic side. A helical membrane pass occupies residues 606–626 (FLLFLGKVFVTGSVGVLAFFF). The Extracellular segment spans residues 627–644 (FTRKIPVLTDEAPALNYY). Residues 645 to 665 (WVPLLTVLIGSYLIAHGFFSV) traverse the membrane as a helical segment. At 666-711 (YAMCVDTLFLCFCEDLERNNGSSSKPYYMSPNLHRILGKKEILSKK) the chain is on the cytoplasmic side.

This sequence belongs to the CTL (choline transporter-like) family.

Its subcellular location is the cell membrane. The catalysed reaction is choline(out) + n H(+)(in) = choline(in) + n H(+)(out). Choline/H+ antiporter. In Xenopus tropicalis (Western clawed frog), this protein is Choline transporter-like protein 5 (slc44a5).